We begin with the raw amino-acid sequence, 334 residues long: F420-dependent glucose-6-phosphate dehydrogenase (334 aa).

Coenzyme F420-(gamma-Glu)n is bound at residue D38. H39 serves as the catalytic Proton donor. Coenzyme F420-(gamma-Glu)n is bound by residues T75 and 106–107; that span reads TG. Residue E108 is the Proton acceptor of the active site. Coenzyme F420-(gamma-Glu)n contacts are provided by residues N111, 175–176, and 178–179; these read GG and LV. The substrate site is built by T193, K196, K257, and R281.

Belongs to the F420-dependent glucose-6-phosphate dehydrogenase family. Homodimer.

The enzyme catalyses oxidized coenzyme F420-(gamma-L-Glu)(n) + D-glucose 6-phosphate + H(+) = 6-phospho-D-glucono-1,5-lactone + reduced coenzyme F420-(gamma-L-Glu)(n). Functionally, catalyzes the coenzyme F420-dependent oxidation of glucose 6-phosphate (G6P) to 6-phosphogluconolactone. The sequence is that of F420-dependent glucose-6-phosphate dehydrogenase from Kribbella flavida (strain DSM 17836 / JCM 10339 / NBRC 14399).